A 668-amino-acid polypeptide reads, in one-letter code: Metal reductase (668 aa).

Residues P23–H25, G57, Q98, R216, R290, and A312–R313 contribute to the FMN site. Residues C336 and C339 each coordinate [4Fe-4S] cluster. Q341 is a binding site for FAD. Residues C343 and C355 each contribute to the [4Fe-4S] cluster site. Residues A386, E405, Q413, R423, and A450 each coordinate FAD.

The protein in the N-terminal section; belongs to the NADH:flavin oxidoreductase/NADH oxidase family. In terms of assembly, homotetramer. Requires FMN as cofactor. FAD serves as cofactor. The cofactor is [4Fe-4S] cluster.

Its subcellular location is the cytoplasm. Its function is as follows. Metal reductase able to reduce Fe(III)-chelates to Fe(II)-chelates, as well as soluble Cr(VI) and U(VI), using NADH as electron donor. Cannot use NADPH as an electron donor. Is unable to reduce riboflavin and FMN with NADH as electron donor. May have an in vivo role in metal reduction in D.reducens, which is an organism capable of reducing contaminant heavy metals and radionuclides. The protein is Metal reductase of Desulforamulus reducens (strain ATCC BAA-1160 / DSM 100696 / MI-1) (Desulfotomaculum reducens).